The primary structure comprises 101 residues: Urease subunit beta (101 aa).

Belongs to the urease beta subunit family. Heterotrimer of UreA (gamma), UreB (beta) and UreC (alpha) subunits. Three heterotrimers associate to form the active enzyme.

Its subcellular location is the cytoplasm. It catalyses the reaction urea + 2 H2O + H(+) = hydrogencarbonate + 2 NH4(+). It participates in nitrogen metabolism; urea degradation; CO(2) and NH(3) from urea (urease route): step 1/1. This chain is Urease subunit beta, found in Burkholderia thailandensis (strain ATCC 700388 / DSM 13276 / CCUG 48851 / CIP 106301 / E264).